The sequence spans 952 residues: Glycine dehydrogenase (decarboxylating) (952 aa).

K696 is subject to N6-(pyridoxal phosphate)lysine.

It belongs to the GcvP family. In terms of assembly, the glycine cleavage system is composed of four proteins: P, T, L and H. Pyridoxal 5'-phosphate is required as a cofactor.

It catalyses the reaction N(6)-[(R)-lipoyl]-L-lysyl-[glycine-cleavage complex H protein] + glycine + H(+) = N(6)-[(R)-S(8)-aminomethyldihydrolipoyl]-L-lysyl-[glycine-cleavage complex H protein] + CO2. Its function is as follows. The glycine cleavage system catalyzes the degradation of glycine. The P protein binds the alpha-amino group of glycine through its pyridoxal phosphate cofactor; CO(2) is released and the remaining methylamine moiety is then transferred to the lipoamide cofactor of the H protein. This chain is Glycine dehydrogenase (decarboxylating), found in Pelagibacter ubique (strain HTCC1062).